A 240-amino-acid chain; its full sequence is Sugar fermentation stimulation protein homolog (240 aa).

Belongs to the SfsA family.

The chain is Sugar fermentation stimulation protein homolog from Saccharolobus solfataricus (strain ATCC 35092 / DSM 1617 / JCM 11322 / P2) (Sulfolobus solfataricus).